The primary structure comprises 340 residues: UDP-glucose 4-epimerase (340 aa).

Residues 12–13 (FI), 32–37 (DNYGNS), 59–60 (DV), 81–85 (FAGLK), asparagine 100, serine 125, tyrosine 150, lysine 154, and phenylalanine 179 each bind NAD(+). The substrate site is built by serine 125 and tyrosine 150. Tyrosine 150 (proton acceptor) is an active-site residue. Substrate contacts are provided by residues asparagine 180, 200–201 (NL), 217–219 (QVY), arginine 232, and 292–295 (RPGD).

This sequence belongs to the NAD(P)-dependent epimerase/dehydratase family. Homodimer. NAD(+) is required as a cofactor.

The catalysed reaction is UDP-alpha-D-glucose = UDP-alpha-D-galactose. Its pathway is carbohydrate metabolism; galactose metabolism. Its function is as follows. Involved in the metabolism of galactose. Catalyzes the conversion of UDP-galactose (UDP-Gal) to UDP-glucose (UDP-Glc) through a mechanism involving the transient reduction of NAD. Can also epimerize UDP-GalNAc to UDP-GlcNAc. Involved in the lacto-N-biose I/galacto-N-biose (LNB/GNB) degradation pathway, which is important for host intestinal colonization by bifidobacteria. In Bifidobacterium longum subsp. longum (strain ATCC 15707 / DSM 20219 / JCM 1217 / NCTC 11818 / E194b), this protein is UDP-glucose 4-epimerase (lnpD).